We begin with the raw amino-acid sequence, 335 residues long: HTH-type transcriptional regulator RipA (335 aa).

An HTH araC/xylS-type domain is found at 119-216; that stretch reads RKVAQKLIAY…GDTPSSFTSP (98 aa). 2 consecutive DNA-binding regions (H-T-H motif) follow at residues 136-157 and 183-206; these read LEFA…VAST and IGQV…KRHT.

In terms of biological role, under iron limitation, represses the acn (aconitase), catA (catechol 1,2 dioxygenase), leuCD (isopropylmalate dehydratase), narKGHJI (nitrite/nitrate transporter and nitrate reductase), sdhCAB (succinate dehydrogenase), pta (phosphotransacetylase) and katA (catalase) genes. This Corynebacterium diphtheriae (strain ATCC 700971 / NCTC 13129 / Biotype gravis) protein is HTH-type transcriptional regulator RipA.